Consider the following 256-residue polypeptide: Enolase-phosphatase E1 (256 aa).

Residues aspartate 14 and glutamate 16 each coordinate Mg(2+). Residues 142-143 (SS) and lysine 176 contribute to the substrate site. A Mg(2+)-binding site is contributed by aspartate 201.

This sequence belongs to the HAD-like hydrolase superfamily. MasA/MtnC family. Monomer. Requires Mg(2+) as cofactor.

It localises to the cytoplasm. Its subcellular location is the nucleus. The catalysed reaction is 5-methylsulfanyl-2,3-dioxopentyl phosphate + H2O = 1,2-dihydroxy-5-(methylsulfanyl)pent-1-en-3-one + phosphate. It functions in the pathway amino-acid biosynthesis; L-methionine biosynthesis via salvage pathway; L-methionine from S-methyl-5-thio-alpha-D-ribose 1-phosphate: step 3/6. The protein operates within amino-acid biosynthesis; L-methionine biosynthesis via salvage pathway; L-methionine from S-methyl-5-thio-alpha-D-ribose 1-phosphate: step 4/6. In terms of biological role, bifunctional enzyme that catalyzes the enolization of 2,3-diketo-5-methylthiopentyl-1-phosphate (DK-MTP-1-P) into the intermediate 2-hydroxy-3-keto-5-methylthiopentenyl-1-phosphate (HK-MTPenyl-1-P), which is then dephosphorylated to form the acireductone 1,2-dihydroxy-3-keto-5-methylthiopentene (DHK-MTPene). In Drosophila yakuba (Fruit fly), this protein is Enolase-phosphatase E1.